We begin with the raw amino-acid sequence, 439 residues long: uncharacterized protein (439 aa).

Disordered regions lie at residues 1 to 36, 126 to 157, and 411 to 439; these read MRPG…SKQA, SRTG…GVPI, and FRSD…AVPR.

This is an uncharacterized protein from Streptomyces fradiae (Streptomyces roseoflavus).